A 444-amino-acid chain; its full sequence is Probable D-serine dehydratase (444 aa).

K110 is modified (N6-(pyridoxal phosphate)lysine).

It belongs to the serine/threonine dehydratase family. DsdA subfamily. Pyridoxal 5'-phosphate serves as cofactor.

The catalysed reaction is D-serine = pyruvate + NH4(+). The polypeptide is Probable D-serine dehydratase (Burkholderia thailandensis (strain ATCC 700388 / DSM 13276 / CCUG 48851 / CIP 106301 / E264)).